Reading from the N-terminus, the 274-residue chain is Copper chaperone for superoxide dismutase (274 aa).

The HMA domain maps to 11-74 (MCALEFTVQM…LLESTGRQAV (64 aa)). Cu cation-binding residues include Cys-22 and Cys-25. Residue Lys-76 forms a Glycyl lysine isopeptide (Lys-Gly) (interchain with G-Cter in ubiquitin) linkage. The segment at 88-234 (AAVAIMEGSG…LACGIIARSA (147 aa)) is superoxide dismutase-like. Cys-141 and Cys-227 are joined by a disulfide. Residues His-147, His-155, His-164, and Asp-167 each contribute to the Zn(2+) site. Glycyl lysine isopeptide (Lys-Gly) (interchain with G-Cter in ubiquitin) cross-links involve residues Lys-189, Lys-216, and Lys-241. Cu cation-binding residues include Cys-244 and Cys-246. Residue Ser-267 is modified to Phosphoserine.

In the C-terminal section; belongs to the Cu-Zn superoxide dismutase family. As to quaternary structure, homodimer, and heterodimer with SOD1. Interacts with COMMD1. Interacts with XIAP/BIRC4. Interacts with SLC31A1(via C-terminal domain); this interaction is Cu(1+)-mediated. The heterodimer CCS:SOD1 interacts with SLC31A1; this heterotrimer is Cu(1+)-mediated and its maintenance is regulated through SOD1 activation. It depends on Cu(2+) as a cofactor. Requires Zn(2+) as cofactor. In terms of processing, ubiquitinion by XIAP/BIRC4 leads to enhancement of its chaperone activity toward its physiologic target, SOD1, rather than proteasomal degradation. XIAP/BIRC4 preferentially ubiquitinates at Lys-241.

It localises to the cytoplasm. Delivers copper to copper zinc superoxide dismutase (SOD1). The chain is Copper chaperone for superoxide dismutase from Rattus norvegicus (Rat).